The chain runs to 642 residues: Threonine--tRNA ligase (642 aa).

Residues Met-1–Thr-61 form the TGS domain. The catalytic stretch occupies residues Asp-240 to Pro-539. Residues Cys-334, His-385, and His-516 each contribute to the Zn(2+) site.

The protein belongs to the class-II aminoacyl-tRNA synthetase family. In terms of assembly, homodimer. Requires Zn(2+) as cofactor.

It is found in the cytoplasm. The enzyme catalyses tRNA(Thr) + L-threonine + ATP = L-threonyl-tRNA(Thr) + AMP + diphosphate + H(+). Its function is as follows. Catalyzes the attachment of threonine to tRNA(Thr) in a two-step reaction: L-threonine is first activated by ATP to form Thr-AMP and then transferred to the acceptor end of tRNA(Thr). Also edits incorrectly charged L-seryl-tRNA(Thr). This chain is Threonine--tRNA ligase, found in Acholeplasma laidlawii (strain PG-8A).